The sequence spans 219 residues: Thiamine-phosphate synthase (219 aa).

4-amino-2-methyl-5-(diphosphooxymethyl)pyrimidine-binding positions include 44-48 (QFREK) and Asn79. Asp80 and Asp99 together coordinate Mg(2+). Ser117 is a binding site for 4-amino-2-methyl-5-(diphosphooxymethyl)pyrimidine. Position 143–145 (143–145 (TST)) interacts with 2-[(2R,5Z)-2-carboxy-4-methylthiazol-5(2H)-ylidene]ethyl phosphate. Lys146 contributes to the 4-amino-2-methyl-5-(diphosphooxymethyl)pyrimidine binding site. Residues Gly175 and 195-196 (IS) each bind 2-[(2R,5Z)-2-carboxy-4-methylthiazol-5(2H)-ylidene]ethyl phosphate.

This sequence belongs to the thiamine-phosphate synthase family. The cofactor is Mg(2+).

It catalyses the reaction 2-[(2R,5Z)-2-carboxy-4-methylthiazol-5(2H)-ylidene]ethyl phosphate + 4-amino-2-methyl-5-(diphosphooxymethyl)pyrimidine + 2 H(+) = thiamine phosphate + CO2 + diphosphate. It carries out the reaction 2-(2-carboxy-4-methylthiazol-5-yl)ethyl phosphate + 4-amino-2-methyl-5-(diphosphooxymethyl)pyrimidine + 2 H(+) = thiamine phosphate + CO2 + diphosphate. The catalysed reaction is 4-methyl-5-(2-phosphooxyethyl)-thiazole + 4-amino-2-methyl-5-(diphosphooxymethyl)pyrimidine + H(+) = thiamine phosphate + diphosphate. It functions in the pathway cofactor biosynthesis; thiamine diphosphate biosynthesis; thiamine phosphate from 4-amino-2-methyl-5-diphosphomethylpyrimidine and 4-methyl-5-(2-phosphoethyl)-thiazole: step 1/1. Functionally, condenses 4-methyl-5-(beta-hydroxyethyl)thiazole monophosphate (THZ-P) and 2-methyl-4-amino-5-hydroxymethyl pyrimidine pyrophosphate (HMP-PP) to form thiamine monophosphate (TMP). This Bacillus cereus (strain ATCC 14579 / DSM 31 / CCUG 7414 / JCM 2152 / NBRC 15305 / NCIMB 9373 / NCTC 2599 / NRRL B-3711) protein is Thiamine-phosphate synthase.